A 77-amino-acid chain; its full sequence is Apelin (77 aa).

The first 22 residues, 1 to 22 (MNLSFCVQALLLLWLSLTAVCG), serve as a signal peptide directing secretion. Residues 23–41 (VPLMLPPDGKGLEEGNMRY) constitute a propeptide that is removed on maturation. The interval 45–77 (PRTSRTGPGAWQGGRRKFRRQRPRLSHKGPMPF) is disordered. The span at 58 to 71 (GRRKFRRQRPRLSH) shows a compositional bias: basic residues.

The protein belongs to the apelin family. In terms of processing, several active peptides may be produced by proteolytic processing of the peptide precursor. As to expression, expressed in the lung, testis, ovary, uterus and mammary gland. Expressed in neurons in the thalamic paraventricular and hypothalamic supraoptic nuclei. The lung, testis and uterus mainly contain a large form that looks like apelin-36, whereas the mammary gland seems to contain 2 forms of apelin, a large form close to apelin-36 and a small form close to apelin-13 (at protein level). Widely expressed in the adult, with highest levels in the mammary gland of lactating animals, very high levels in the lung, intermediate levels in the spinal cord, ovary, adipose tissue, brain (neuronal cell bodies and fibers in the supraoptic and the paraventricular nuclei), heart and testis, and lowest levels in the pituitary gland, kidney, stomach, uterus and pancreas.

Its subcellular location is the secreted. The protein localises to the extracellular space. Peptide hormone that functions as endogenous ligand for the G-protein-coupled apelin receptor (APLNR/APJ), that plays a role in cadiovascular homeostasis. Functions as a balanced agonist activating both G(i) protein pathway and beta-arrestin pathway of APLNR. Downstream G proteins activation, apelin can inhibit cAMP production and activate key intracellular effectors such as ERKs. On the other hand, APLNR activation induces beta-arrestin recruitment to the membrane leading to desensitization and internalization of the receptor. Apelin blunts cardiac hypertrophic induction from APLNR on response to pathological stimuli, but also induces myocardial hypertrophy under normal conditions. Apelin-36 dissociates more hardly than (pyroglu)apelin-13 from APLNR. Involved in the regulation of cardiac precursor cell movements during gastrulation and heart morphogenesis. Has an inhibitory effect on cytokine production in response to T-cell receptor/CD3 cross-linking; the oral intake of apelin in the colostrum and the milk might therefore modulate immune responses in neonates. Plays a role in early coronary blood vessels formation. Mediates myocardial contractility in an ERK1/2-dependent manner. May also have a role in the central control of body fluid homeostasis by influencing vasopressin release and drinking behavior. This Rattus norvegicus (Rat) protein is Apelin.